The primary structure comprises 376 residues: MSWVRFTIEQKDGNFAYPPPFYKDPILSPPSPPPPSSGNRISPAVLFVIVILAVLFFISGLLHLLVRFLIKHPSATASSRSNRFPEISTSDALQRQLQQLFHLNDSGLDQAFIDALPVFHYKEIVGSAGGGGGNGAAQEPFDCAVCLCEFSEKDKLRLLPMCSHAFHLNCIDTWLQSNSTCPLCRGTLFSPGFSMENPMFDFDDIREDEEGVTENGSQKTMEIQEIVVEKGVLPVRLGKFKRLDNVGNGQGQDVVAGGETSSSNLDARRCFSMGSYQYILGNSELKVPFANDRLPRLKPQDKESEQTGNSSSEDNKKINTVAKGESFSVSKIWLWPKKDKFSSDAQRRLPSSSLNVDDLPKLPWMEEHKKLENDGR.

The chain crosses the membrane as a helical span at residues 45-65 (VLFVIVILAVLFFISGLLHLL). The RING-type; atypical zinc finger occupies 143 to 185 (CAVCLCEFSEKDKLRLLPMCSHAFHLNCIDTWLQSNSTCPLCR). Basic and acidic residues-rich tracts occupy residues 296 to 305 (RLKPQDKESE) and 358 to 376 (DLPKLPWMEEHKKLENDGR). Disordered stretches follow at residues 296–320 (RLKPQDKESEQTGNSSSEDNKKINT) and 341–376 (FSSDAQRRLPSSSLNVDDLPKLPWMEEHKKLENDGR).

It belongs to the RING-type zinc finger family. ATL subfamily.

It localises to the membrane. It catalyses the reaction S-ubiquitinyl-[E2 ubiquitin-conjugating enzyme]-L-cysteine + [acceptor protein]-L-lysine = [E2 ubiquitin-conjugating enzyme]-L-cysteine + N(6)-ubiquitinyl-[acceptor protein]-L-lysine.. Its pathway is protein modification; protein ubiquitination. This Arabidopsis thaliana (Mouse-ear cress) protein is RING-H2 finger protein ATL46 (ATL46).